Consider the following 447-residue polypeptide: Phosphoglucosamine mutase (447 aa).

Catalysis depends on serine 108, which acts as the Phosphoserine intermediate. Serine 108, aspartate 247, aspartate 249, and aspartate 251 together coordinate Mg(2+). A Phosphoserine modification is found at serine 108.

This sequence belongs to the phosphohexose mutase family. Mg(2+) serves as cofactor. Activated by phosphorylation.

It catalyses the reaction alpha-D-glucosamine 1-phosphate = D-glucosamine 6-phosphate. Functionally, catalyzes the conversion of glucosamine-6-phosphate to glucosamine-1-phosphate. The sequence is that of Phosphoglucosamine mutase from Bordetella avium (strain 197N).